Reading from the N-terminus, the 567-residue chain is uncharacterized protein (567 aa).

A disordered region spans residues 1–26 (MPSEKATTRHLPGAVETLSPRTGRRP). 6 consecutive transmembrane segments (helical) span residues 57–77 (AILV…TVAF), 90–110 (VSFG…TYWL), 142–162 (VALA…IIYG), 173–193 (LFSM…LTEF), 221–241 (MLVW…TAIF), and 257–277 (VLIL…ILAW). The 52-residue stretch at 278–329 (LTATPVRVVREALNRVEQGDLSGDLVVFDGTELGELQRGFNRMVEGLRERER) folds into the HAMP domain. One can recognise a Guanylate cyclase domain in the interval 361 to 485 (AVVFVDIVGS…EPVNEAARLC (125 aa)).

It belongs to the adenylyl cyclase class-3 family.

Its subcellular location is the cell membrane. This is an uncharacterized protein from Mycobacterium tuberculosis (strain ATCC 25618 / H37Rv).